We begin with the raw amino-acid sequence, 319 residues long: ATP-dependent 6-phosphofructokinase (319 aa).

Residue Gly-11 participates in ATP binding. 21–25 (RAVVR) is an ADP binding site. ATP contacts are provided by residues 72–73 (RC) and 102–105 (GDGS). Residue Asp-103 coordinates Mg(2+). A substrate-binding site is contributed by 125 to 127 (TID). Residue Asp-127 is the Proton acceptor of the active site. Residue Arg-154 participates in ADP binding. Substrate contacts are provided by residues Arg-162 and 169–171 (MGR). ADP is bound by residues 185 to 187 (GAE), Arg-211, and 213 to 215 (KRH). Substrate-binding positions include Glu-222, Arg-243, and 249 to 252 (HVQR).

Belongs to the phosphofructokinase type A (PFKA) family. ATP-dependent PFK group I subfamily. Prokaryotic clade 'B1' sub-subfamily. In terms of assembly, homotetramer. Requires Mg(2+) as cofactor.

It localises to the cytoplasm. The enzyme catalyses beta-D-fructose 6-phosphate + ATP = beta-D-fructose 1,6-bisphosphate + ADP + H(+). It participates in carbohydrate degradation; glycolysis; D-glyceraldehyde 3-phosphate and glycerone phosphate from D-glucose: step 3/4. Its activity is regulated as follows. Allosterically activated by ADP and other diphosphonucleosides, and allosterically inhibited by phosphoenolpyruvate. Its function is as follows. Catalyzes the phosphorylation of D-fructose 6-phosphate to fructose 1,6-bisphosphate by ATP, the first committing step of glycolysis. This Clostridioides difficile (strain 630) (Peptoclostridium difficile) protein is ATP-dependent 6-phosphofructokinase.